A 286-amino-acid polypeptide reads, in one-letter code: Bifunctional protein FolD (286 aa).

Residues 166–168 (GAS) and I232 contribute to the NADP(+) site.

This sequence belongs to the tetrahydrofolate dehydrogenase/cyclohydrolase family. In terms of assembly, homodimer.

The catalysed reaction is (6R)-5,10-methylene-5,6,7,8-tetrahydrofolate + NADP(+) = (6R)-5,10-methenyltetrahydrofolate + NADPH. It catalyses the reaction (6R)-5,10-methenyltetrahydrofolate + H2O = (6R)-10-formyltetrahydrofolate + H(+). It functions in the pathway one-carbon metabolism; tetrahydrofolate interconversion. In terms of biological role, catalyzes the oxidation of 5,10-methylenetetrahydrofolate to 5,10-methenyltetrahydrofolate and then the hydrolysis of 5,10-methenyltetrahydrofolate to 10-formyltetrahydrofolate. The sequence is that of Bifunctional protein FolD from Vibrio cholerae serotype O1 (strain ATCC 39541 / Classical Ogawa 395 / O395).